We begin with the raw amino-acid sequence, 2150 residues long: A disintegrin and metalloproteinase with thrombospondin motifs gon-1 (2150 aa).

The first 28 residues, 1 to 28, serve as a signal peptide directing secretion; the sequence is MRSIGGSFHLLQPVVAALILLVVCLVYA. The propeptide occupies 29-273; sequence LQSGSGTISE…VIERKARSRR (245 aa). Residues Asn134, Asn213, Asn243, and Asn248 are each glycosylated (N-linked (GlcNAc...) asparagine). One can recognise a Peptidase M12B domain in the interval 280–493; the sequence is HYVEVLVVAD…GQTQCLFDQP (214 aa). Cystine bridges form between Cys402–Cys488 and Cys440–Cys470. His424 provides a ligand contact to Zn(2+). Glu425 is a catalytic residue. Zn(2+) contacts are provided by His428 and His434. The Disintegrin domain occupies 503 to 587; sequence FVRDEPGKKY…RLAPESLTKI (85 aa). Residues 588 to 643 form the TSP type-1 1 domain; sequence DGQWGDWRSWGECSRTCGGGVQKGLRDCDSPKPRNGGKYCVGQRERYRSCNTQECP. Cystine bridges form between Cys600/Cys637, Cys604/Cys642, and Cys615/Cys627. Asn842 is a glycosylation site (N-linked (GlcNAc...) asparagine). 11 TSP type-1 domains span residues 943–1003, 1004–1057, 1060–1115, 1116–1165, 1168–1227, 1228–1277, 1280–1339, 1352–1409, 1410–1469, 1474–1524, and 1527–1585; these read CSTR…IDCS, GRKW…RECN, PCPR…HACT, WWQF…KPCH, SCPK…GTCP, FWRN…QTCH, PCTS…DTCD, PPIR…RDCS, YWKM…EPCP, HIGS…ELCP, and TNNS…PPCR. 2 N-linked (GlcNAc...) asparagine glycosylation sites follow: Asn1139 and Asn1199. N-linked (GlcNAc...) asparagine glycosylation is found at Asn1370 and Asn1432. N-linked (GlcNAc...) asparagine glycans are attached at residues Asn1528, Asn1590, Asn1606, and Asn1654. The disordered stretch occupies residues 1590 to 1614; the sequence is NKTSSASMTSLSSSNSNTTSSASAS. A compositionally biased stretch (low complexity) spans 1592–1614; that stretch reads TSSASMTSLSSSNSNTTSSASAS. 5 consecutive TSP type-1 domains span residues 1621 to 1675, 1678 to 1736, 1737 to 1793, 1794 to 1866, and 1867 to 1924; these read PVVS…VRCR, HCPR…VACP, AYRW…DTSN, CPYE…NPCD, and SEFK…RNCL. Cystine bridges form between Cys1679/Cys1718, Cys1690/Cys1694, Cys1690/Cys1730, Cys1694/Cys1735, Cys1705/Cys1718, and Cys1730/Cys1735. Residues Asn1828 and Asn1855 are each glycosylated (N-linked (GlcNAc...) asparagine). The GON domain occupies 1924-2123; sequence LPSTCQELKS…RYKGLIFEVN (200 aa). 3 N-linked (GlcNAc...) asparagine glycosylation sites follow: Asn1942, Asn1960, and Asn1997.

Zn(2+) serves as cofactor. As to expression, expressed by the gonadal distal tip cells (DTCs). Expressed in muscles, including body wall, vulval and anal depressor muscles. Expressed in motor neurons and in ASI and ASJ neurons.

Its subcellular location is the secreted. The protein localises to the extracellular space. The protein resides in the extracellular matrix. It is found in the basement membrane. It localises to the endoplasmic reticulum. Its subcellular location is the golgi apparatus. Functionally, secreted metalloprotease required for distal tip cell (DTC) migration along the body wall basement membranes, a key step that promotes gonad morphogenesis. Probably acts by remodeling the basement membrane during cell migration. Required to restrict presynaptic growth at the neuromuscular junctions (NMJ) in late larval stage and in adult motor neurons, probably by controlling collagen IV emb-9 degradation, a component of the synapse basement membrane. Also involved in the organization of adult muscle morphology. Has a protease-independent function in promoting the transport from the endoplasmic reticulum to the Golgi apparatus of a variety of secretory cargos. Required for the secretion of insulin-like peptide ins-7, daf-28 and ins-18 and TGF beta-like protein daf-7. In peripheral tissues, negatively regulates insulin-mediated daf-16 translocation and thereby negatively regulates lifespan and dauer formation. This Caenorhabditis elegans protein is A disintegrin and metalloproteinase with thrombospondin motifs gon-1.